A 300-amino-acid chain; its full sequence is Inosose dehydratase (300 aa).

The protein belongs to the IolE/MocC family. Glutathione serves as cofactor. The cofactor is Co(2+). It depends on Mn(2+) as a cofactor.

It catalyses the reaction scyllo-inosose = 3D-3,5/4-trihydroxycyclohexane-1,2-dione + H2O. Functionally, catalyzes the dehydration of inosose (2-keto-myo-inositol, 2KMI or 2,4,6/3,5-pentahydroxycyclohexanone) to 3D-(3,5/4)-trihydroxycyclohexane-1,2-dione (D-2,3-diketo-4-deoxy-epi-inositol). The protein is Inosose dehydratase of Mesomycoplasma hyopneumoniae (strain 232) (Mycoplasma hyopneumoniae).